The chain runs to 194 residues: ATP-dependent Clp protease proteolytic subunit (194 aa).

S98 acts as the Nucleophile in catalysis. The active site involves H123.

Belongs to the peptidase S14 family. As to quaternary structure, fourteen ClpP subunits assemble into 2 heptameric rings which stack back to back to give a disk-like structure with a central cavity, resembling the structure of eukaryotic proteasomes.

The protein resides in the cytoplasm. The catalysed reaction is Hydrolysis of proteins to small peptides in the presence of ATP and magnesium. alpha-casein is the usual test substrate. In the absence of ATP, only oligopeptides shorter than five residues are hydrolyzed (such as succinyl-Leu-Tyr-|-NHMec, and Leu-Tyr-Leu-|-Tyr-Trp, in which cleavage of the -Tyr-|-Leu- and -Tyr-|-Trp bonds also occurs).. In terms of biological role, cleaves peptides in various proteins in a process that requires ATP hydrolysis. Has a chymotrypsin-like activity. Plays a major role in the degradation of misfolded proteins. The sequence is that of ATP-dependent Clp protease proteolytic subunit from Aliarcobacter butzleri (strain RM4018) (Arcobacter butzleri).